The following is a 436-amino-acid chain: 3-ketoacyl-CoA thiolase (436 aa).

Residue C99 is the Acyl-thioester intermediate of the active site. Active-site proton acceptor residues include H392 and C422.

This sequence belongs to the thiolase-like superfamily. Thiolase family. As to quaternary structure, heterotetramer of two alpha chains (FadJ) and two beta chains (FadI).

Its subcellular location is the cytoplasm. The enzyme catalyses an acyl-CoA + acetyl-CoA = a 3-oxoacyl-CoA + CoA. It participates in lipid metabolism; fatty acid beta-oxidation. Its function is as follows. Catalyzes the final step of fatty acid oxidation in which acetyl-CoA is released and the CoA ester of a fatty acid two carbons shorter is formed. The protein is 3-ketoacyl-CoA thiolase of Salmonella paratyphi B (strain ATCC BAA-1250 / SPB7).